Here is a 386-residue protein sequence, read N- to C-terminus: Bifunctional enzyme IspD/IspF (386 aa).

The 2-C-methyl-D-erythritol 4-phosphate cytidylyltransferase stretch occupies residues 1-226; sequence MATPSPLPSF…EDFMADLLPV (226 aa). The 2-C-methyl-D-erythritol 2,4-cyclodiphosphate synthase stretch occupies residues 227-386; sequence RVGTGFDVHK…ATVVRKDTPA (160 aa). A divalent metal cation is bound by residues Asp-233 and His-235. 4-CDP-2-C-methyl-D-erythritol 2-phosphate contacts are provided by residues 233–235 and 259–260; these read DVH and HS. Position 267 (His-267) interacts with a divalent metal cation. 4-CDP-2-C-methyl-D-erythritol 2-phosphate contacts are provided by residues 281–283, 357–360, Phe-364, and Arg-367; these read DIG and TTTE.

This sequence in the N-terminal section; belongs to the IspD/TarI cytidylyltransferase family. IspD subfamily. It in the C-terminal section; belongs to the IspF family. A divalent metal cation serves as cofactor.

It carries out the reaction 2-C-methyl-D-erythritol 4-phosphate + CTP + H(+) = 4-CDP-2-C-methyl-D-erythritol + diphosphate. It catalyses the reaction 4-CDP-2-C-methyl-D-erythritol 2-phosphate = 2-C-methyl-D-erythritol 2,4-cyclic diphosphate + CMP. Its pathway is isoprenoid biosynthesis; isopentenyl diphosphate biosynthesis via DXP pathway; isopentenyl diphosphate from 1-deoxy-D-xylulose 5-phosphate: step 2/6. The protein operates within isoprenoid biosynthesis; isopentenyl diphosphate biosynthesis via DXP pathway; isopentenyl diphosphate from 1-deoxy-D-xylulose 5-phosphate: step 4/6. Functionally, bifunctional enzyme that catalyzes the formation of 4-diphosphocytidyl-2-C-methyl-D-erythritol from CTP and 2-C-methyl-D-erythritol 4-phosphate (MEP) (IspD), and catalyzes the conversion of 4-diphosphocytidyl-2-C-methyl-D-erythritol 2-phosphate (CDP-ME2P) to 2-C-methyl-D-erythritol 2,4-cyclodiphosphate (ME-CPP) with a corresponding release of cytidine 5-monophosphate (CMP) (IspF). The polypeptide is Bifunctional enzyme IspD/IspF (Erythrobacter litoralis (strain HTCC2594)).